Reading from the N-terminus, the 1231-residue chain is Cohesin subunit SA-2 (1231 aa).

Methionine 1 carries the N-acetylmethionine modification. Residues 1-75 (MIAAPEIPTD…GPNRMNGHHQ (75 aa)) are disordered. A compositionally biased stretch (basic residues) spans 36-48 (KQGKGKTCKKGKK). The SCD domain maps to 293-378 (FVHRYRDAIA…SRFKDRIVSM (86 aa)). N6-acetyllysine is present on lysine 607. Serine 1058, serine 1061, serine 1064, and serine 1065 each carry phosphoserine. A disordered region spans residues 1064–1083 (SSRGSTVRSKKSKPSTGKRK). Over residues 1071-1082 (RSKKSKPSTGKR) the composition is skewed to basic residues. Residue threonine 1112 is modified to Phosphothreonine. Phosphoserine occurs at positions 1177 and 1178.

This sequence belongs to the SCC3 family. Interacts directly with RAD21 in cohesin complex. Cohesin complexes are composed of a heterodimer between a SMC1 protein (SMC1A or SMC1B) and SMC3, which are attached via their hinge domain, and RAD21 which link them at their heads, and one STAG protein (STAG1, STAG2 or STAG3). In cohesin complexes, STAG2 is mutually exclusive with STAG1 and STAG3. Phosphorylated by PLK1. The large dissociation of cohesin from chromosome arms during prophase is partly due to its phosphorylation.

It localises to the nucleus. Its subcellular location is the chromosome. The protein resides in the centromere. Functionally, component of cohesin complex, a complex required for the cohesion of sister chromatids after DNA replication. The cohesin complex apparently forms a large proteinaceous ring within which sister chromatids can be trapped. At anaphase, the complex is cleaved and dissociates from chromatin, allowing sister chromatids to segregate. The cohesin complex may also play a role in spindle pole assembly during mitosis. The protein is Cohesin subunit SA-2 (STAG2) of Homo sapiens (Human).